A 205-amino-acid polypeptide reads, in one-letter code: Protein-L-isoaspartate O-methyltransferase (205 aa).

Residue Ser56 is part of the active site.

Belongs to the methyltransferase superfamily. L-isoaspartyl/D-aspartyl protein methyltransferase family.

It is found in the cytoplasm. The catalysed reaction is [protein]-L-isoaspartate + S-adenosyl-L-methionine = [protein]-L-isoaspartate alpha-methyl ester + S-adenosyl-L-homocysteine. Functionally, catalyzes the methyl esterification of L-isoaspartyl residues in peptides and proteins that result from spontaneous decomposition of normal L-aspartyl and L-asparaginyl residues. It plays a role in the repair and/or degradation of damaged proteins. The protein is Protein-L-isoaspartate O-methyltransferase of Pyrobaculum arsenaticum (strain DSM 13514 / JCM 11321 / PZ6).